Reading from the N-terminus, the 943-residue chain is Translation initiation factor IF-2 (943 aa).

The disordered stretch occupies residues Ser-30 to Glu-357. Composition is skewed to basic and acidic residues over residues Pro-69–Ser-82, Phe-112–Asn-137, Gln-145–Asn-155, Asp-163–Ala-196, and Arg-224–Gln-253. Over residues Val-254–Lys-266 the composition is skewed to low complexity. Basic and acidic residues predominate over residues Lys-296–Lys-309. The span at Asn-313–Lys-332 shows a compositional bias: low complexity. A tr-type G domain is found at Glu-445 to Lys-614. The tract at residues Gly-454–Thr-461 is G1. A GTP-binding site is contributed by Gly-454–Thr-461. A G2 region spans residues Gly-479–His-483. Residues Asp-500–Gly-503 are G3. GTP is bound by residues Asp-500–His-504 and Asn-554–Asp-557. Residues Asn-554 to Asp-557 form a G4 region. Residues Ser-590–Lys-592 form a G5 region.

The protein belongs to the TRAFAC class translation factor GTPase superfamily. Classic translation factor GTPase family. IF-2 subfamily.

The protein localises to the cytoplasm. In terms of biological role, one of the essential components for the initiation of protein synthesis. Protects formylmethionyl-tRNA from spontaneous hydrolysis and promotes its binding to the 30S ribosomal subunits. Also involved in the hydrolysis of GTP during the formation of the 70S ribosomal complex. This chain is Translation initiation factor IF-2, found in Streptococcus thermophilus (strain ATCC BAA-250 / LMG 18311).